The following is a 134-amino-acid chain: Cytochrome b5 (134 aa).

The Cytochrome b5 heme-binding domain occupies 6-82; it reads TKTFTRAEVA…MKKYKIGELV (77 aa). Residues His-41 and His-65 each coordinate heme. Residues 86–105 form a disordered region; the sequence is RTSVAQKSEPTWSTEQQTEE. Residues 87 to 105 are compositionally biased toward polar residues; it reads TSVAQKSEPTWSTEQQTEE. Residues 111 to 131 traverse the membrane as a helical segment; it reads WLVPLVLCLVATLFYKFFFGG.

This sequence belongs to the cytochrome b5 family.

The protein resides in the endoplasmic reticulum membrane. Its subcellular location is the microsome membrane. Functionally, cytochrome b5 is a membrane-bound hemoprotein which functions as an electron carrier for several membrane-bound oxygenases. This Drosophila melanogaster (Fruit fly) protein is Cytochrome b5 (Cyt-b5).